Consider the following 301-residue polypeptide: Diaminopimelate epimerase (301 aa).

Positions 15, 47, and 67 each coordinate substrate. The active-site Proton donor is Cys-76. Residues Gly-77 to Asn-78, Asn-163, Asn-197, and Glu-215 to Arg-216 each bind substrate. Catalysis depends on Cys-224, which acts as the Proton acceptor. Gly-225–Ser-226 contacts substrate.

It belongs to the diaminopimelate epimerase family. Homodimer.

The protein localises to the cytoplasm. The enzyme catalyses (2S,6S)-2,6-diaminopimelate = meso-2,6-diaminopimelate. Its pathway is amino-acid biosynthesis; L-lysine biosynthesis via DAP pathway; DL-2,6-diaminopimelate from LL-2,6-diaminopimelate: step 1/1. Its function is as follows. Catalyzes the stereoinversion of LL-2,6-diaminopimelate (L,L-DAP) to meso-diaminopimelate (meso-DAP), a precursor of L-lysine and an essential component of the bacterial peptidoglycan. The chain is Diaminopimelate epimerase from Rhizobium etli (strain ATCC 51251 / DSM 11541 / JCM 21823 / NBRC 15573 / CFN 42).